We begin with the raw amino-acid sequence, 430 residues long: Adenylosuccinate synthetase (430 aa).

Residues Gly12–Lys18 and Gly40–Thr42 contribute to the GTP site. The Proton acceptor role is filled by Asp13. Residues Asp13 and Gly40 each coordinate Mg(2+). Residues Asp13–Lys16, Asn38–His41, Thr128, Arg142, Gln223, Thr238, and Arg302 each bind IMP. His41 serves as the catalytic Proton donor. A substrate-binding site is contributed by Val298–Arg304. Residues Arg304, Lys330–Asp332, and Gly412–Gly414 each bind GTP.

This sequence belongs to the adenylosuccinate synthetase family. Homodimer. The cofactor is Mg(2+).

The protein localises to the cytoplasm. The catalysed reaction is IMP + L-aspartate + GTP = N(6)-(1,2-dicarboxyethyl)-AMP + GDP + phosphate + 2 H(+). It functions in the pathway purine metabolism; AMP biosynthesis via de novo pathway; AMP from IMP: step 1/2. Functionally, plays an important role in the de novo pathway of purine nucleotide biosynthesis. Catalyzes the first committed step in the biosynthesis of AMP from IMP. The chain is Adenylosuccinate synthetase from Corynebacterium aurimucosum (strain ATCC 700975 / DSM 44827 / CIP 107346 / CN-1) (Corynebacterium nigricans).